The chain runs to 69 residues: DNA-directed RNA polymerase subunit omega (69 aa).

This sequence belongs to the RNA polymerase subunit omega family. In terms of assembly, the RNAP catalytic core consists of 2 alpha, 1 beta, 1 beta' and 1 omega subunit. When a sigma factor is associated with the core the holoenzyme is formed, which can initiate transcription.

The catalysed reaction is RNA(n) + a ribonucleoside 5'-triphosphate = RNA(n+1) + diphosphate. Its function is as follows. Promotes RNA polymerase assembly. Latches the N- and C-terminal regions of the beta' subunit thereby facilitating its interaction with the beta and alpha subunits. The chain is DNA-directed RNA polymerase subunit omega from Pelotomaculum thermopropionicum (strain DSM 13744 / JCM 10971 / SI).